Here is a 339-residue protein sequence, read N- to C-terminus: Serpentine receptor class delta-19 (339 aa).

7 helical membrane passes run 2 to 22 (IIFFEIWHWSWALLGCYLNLL), 39 to 59 (ATLIINFAATDFVECALDLFI), 90 to 110 (VGLSFLLHCLTHSVWSLLISF), 130 to 150 (ITIMFYIPSLVQALTYWTLFV), 187 to 207 (VYAVAHICLPFFPVYITIFVL), 242 to 262 (IIPMFLGIAVLLYFSSQSGLL), and 270 to 290 (SIFSVAILMPALSPITYLYFV).

Belongs to the nematode receptor-like protein srd family.

It is found in the membrane. This Caenorhabditis elegans protein is Serpentine receptor class delta-19 (srd-19).